We begin with the raw amino-acid sequence, 412 residues long: Imidazolonepropionase (412 aa).

Histidine 71 and histidine 73 together coordinate Fe(3+). Residues histidine 71 and histidine 73 each contribute to the Zn(2+) site. Arginine 80, tyrosine 143, and histidine 176 together coordinate 4-imidazolone-5-propanoate. Tyrosine 143 is a binding site for N-formimidoyl-L-glutamate. Histidine 241 serves as a coordination point for Fe(3+). Histidine 241 lines the Zn(2+) pocket. Glutamine 244 is a binding site for 4-imidazolone-5-propanoate. Aspartate 316 is a binding site for Fe(3+). Aspartate 316 contacts Zn(2+). N-formimidoyl-L-glutamate contacts are provided by asparagine 318 and glycine 320. Threonine 321 is a 4-imidazolone-5-propanoate binding site.

This sequence belongs to the metallo-dependent hydrolases superfamily. HutI family. The cofactor is Zn(2+). Requires Fe(3+) as cofactor.

It is found in the cytoplasm. The catalysed reaction is 4-imidazolone-5-propanoate + H2O = N-formimidoyl-L-glutamate. It functions in the pathway amino-acid degradation; L-histidine degradation into L-glutamate; N-formimidoyl-L-glutamate from L-histidine: step 3/3. Functionally, catalyzes the hydrolytic cleavage of the carbon-nitrogen bond in imidazolone-5-propanoate to yield N-formimidoyl-L-glutamate. It is the third step in the universal histidine degradation pathway. The chain is Imidazolonepropionase from Aromatoleum aromaticum (strain DSM 19018 / LMG 30748 / EbN1) (Azoarcus sp. (strain EbN1)).